A 307-amino-acid polypeptide reads, in one-letter code: Lactamase-like protein vrtG (307 aa).

Residues H97, H99, D101, and H102 each contribute to the Zn(2+) site. D101 serves as the catalytic Proton donor/acceptor.

Belongs to the metallo-beta-lactamase superfamily. The cofactor is Zn(2+).

Its pathway is secondary metabolite biosynthesis; terpenoid biosynthesis. In terms of biological role, lactamase-like protein; part of the gene cluster that mediates the biosynthesis of viridicatumtoxin, a tetracycline-like fungal meroterpenoid with a unique, fused spirobicyclic ring system. The first step of the pathway is the production of the malonamoyl-CoA starter unit for the polyketide synthase vrtA. The aldolase vrtJ may be involved in the synthesis of the malonamate substrate for malonamoyl-CoA synthetase vrtB. The polyketide synthase vrtA then may utilize the malonamoyl-CoA starter unit, followed by sequential condensation of eight malonyl-CoA units to form the polyketide backbone. The cyclization of the last ring could be mediated by the lactamase-like protein vrtG. The proposed post-PKS tailoring steps are a hydroxylation at C5 catalyzed the cytochrome P450 monooxygenase vrtE, a hydroxylation at C12a catalyzed by VrtH and/or VrtI, and an O-methylation by the O-methyltransferase vrtF. VrtC is then proposed to catalyze the transfer of a geranyl group synthesized by vrtD to the aromatic C ring of the tetracyclic polyketide intermediate of viridicatumtoxin to yield previridicatumtoxin. Finally, the cytochrome P450 monooxygenase vrtK catalyzes the spirocyclization of the geranyl moiety of previridicatumtoxin to afford viridicatumtoxin. The chain is Lactamase-like protein vrtG from Penicillium aethiopicum.